The chain runs to 177 residues: Acetyltransferase (177 aa).

One can recognise an N-acetyltransferase domain in the interval 4-174 (AQLRRVTAES…PTAIYFKTLG (171 aa)). Residues Glu27, 96-98 (LMV), 104-109 (GRGLGR), 130-131 (DT), and Tyr141 contribute to the acetyl-CoA site.

Renders tabtoxin-producing pathogens tolerant to their own phytotoxins. The sequence is that of Acetyltransferase (ttr) from Pseudomonas amygdali pv. tabaci (Pseudomonas syringae pv. tabaci).